We begin with the raw amino-acid sequence, 229 residues long: Leucyl/phenylalanyl-tRNA--protein transferase (229 aa).

The protein belongs to the L/F-transferase family.

The protein localises to the cytoplasm. The catalysed reaction is N-terminal L-lysyl-[protein] + L-leucyl-tRNA(Leu) = N-terminal L-leucyl-L-lysyl-[protein] + tRNA(Leu) + H(+). It catalyses the reaction N-terminal L-arginyl-[protein] + L-leucyl-tRNA(Leu) = N-terminal L-leucyl-L-arginyl-[protein] + tRNA(Leu) + H(+). It carries out the reaction L-phenylalanyl-tRNA(Phe) + an N-terminal L-alpha-aminoacyl-[protein] = an N-terminal L-phenylalanyl-L-alpha-aminoacyl-[protein] + tRNA(Phe). Functionally, functions in the N-end rule pathway of protein degradation where it conjugates Leu, Phe and, less efficiently, Met from aminoacyl-tRNAs to the N-termini of proteins containing an N-terminal arginine or lysine. In Pseudomonas syringae pv. tomato (strain ATCC BAA-871 / DC3000), this protein is Leucyl/phenylalanyl-tRNA--protein transferase.